Reading from the N-terminus, the 111-residue chain is Large ribosomal subunit protein uL24 (111 aa).

It belongs to the universal ribosomal protein uL24 family. In terms of assembly, part of the 50S ribosomal subunit.

One of two assembly initiator proteins, it binds directly to the 5'-end of the 23S rRNA, where it nucleates assembly of the 50S subunit. Functionally, one of the proteins that surrounds the polypeptide exit tunnel on the outside of the subunit. The polypeptide is Large ribosomal subunit protein uL24 (Myxococcus xanthus (strain DK1622)).